We begin with the raw amino-acid sequence, 213 residues long: Ras-related protein Rab-4A (213 aa).

GTP-binding residues include Gly18, Thr19, Gly20, Lys21, Ser22, Cys23, Ser37, His39, and Thr40. Ser22 contacts Mg(2+). The Switch 1 motif lies at 39 to 44; the sequence is HTIGVE. Positions 40 and 63 each coordinate Mg(2+). Residues 65 to 74 carry the Switch 2 motif; sequence AGQERFRSVT. Gly66, Asn121, Lys122, Asp124, Ala152, and Leu153 together coordinate GTP. 2 S-geranylgeranyl cysteine lipidation sites follow: Cys211 and Cys213. Cys213 carries the post-translational modification Cysteine methyl ester.

The protein belongs to the small GTPase superfamily. Rab family. The cofactor is Mg(2+).

The protein resides in the membrane. It localises to the cytoplasm. The protein localises to the early endosome membrane. It is found in the recycling endosome membrane. It catalyses the reaction GTP + H2O = GDP + phosphate + H(+). With respect to regulation, regulated by guanine nucleotide exchange factors (GEFs) which promote the exchange of bound GDP for free GTP. Regulated by GTPase activating proteins (GAPs) which increase the GTP hydrolysis activity. Inhibited by GDP dissociation inhibitors (GDIs). In terms of biological role, the small GTPases Rab are key regulators of intracellular membrane trafficking, from the formation of transport vesicles to their fusion with membranes. Rabs cycle between an inactive GDP-bound form and an active GTP-bound form that is able to recruit to membranes different sets of downstream effectors directly responsible for vesicle formation, movement, tethering and fusion. RAB4A is involved in protein transport. Also plays a role in vesicular traffic. Mediates VEGFR2 endosomal trafficking to enhance VEGFR2 signaling. Acts as a regulator of platelet alpha-granule release during activation and aggregation of platelets. The protein is Ras-related protein Rab-4A (rab4a) of Danio rerio (Zebrafish).